Here is an 89-residue protein sequence, read N- to C-terminus: MTTANTNETAAAAAAKNRRNKKKKRVCAFCADNIDRIDYKDVARLRKYITERGKILPRRITGNCARHQRQLTKAIKRARQIALLPYTVE.

Residues 1-15 show a composition bias toward low complexity; the sequence is MTTANTNETAAAAAA. Positions 1–22 are disordered; that stretch reads MTTANTNETAAAAAAKNRRNKK.

This sequence belongs to the bacterial ribosomal protein bS18 family. As to quaternary structure, part of the 30S ribosomal subunit. Forms a tight heterodimer with protein bS6.

Binds as a heterodimer with protein bS6 to the central domain of the 16S rRNA, where it helps stabilize the platform of the 30S subunit. The polypeptide is Small ribosomal subunit protein bS18 (Caldanaerobacter subterraneus subsp. tengcongensis (strain DSM 15242 / JCM 11007 / NBRC 100824 / MB4) (Thermoanaerobacter tengcongensis)).